Consider the following 109-residue polypeptide: Small ribosomal subunit protein eS25z (109 aa).

Residues 1-36 (MAPKKDKVPPPSSKPAKSGGGKQKKKKWSKGKQKEK) form a disordered region. Over residues 22-31 (KQKKKKWSKG) the composition is skewed to basic residues.

The protein belongs to the eukaryotic ribosomal protein eS25 family.

This is Small ribosomal subunit protein eS25z (RPS25A) from Arabidopsis thaliana (Mouse-ear cress).